The following is a 607-amino-acid chain: Sulfite reductase [NADPH] flavoprotein alpha-component (607 aa).

The region spanning 66–204 (VTILYGSQTG…AAGQWHADVL (139 aa)) is the Flavodoxin-like domain. FMN is bound by residues 72 to 77 (SQTGNG), 119 to 122 (STHG), and 155 to 164 (LGDSSYEFFC). The FAD-binding FR-type domain maps to 239–456 (QNPYRAEVLV…VEPNKHFRLP (218 aa)). Residues Thr-327, Leu-361, 395–398 (RLYS), 413–415 (TVA), and 428–431 (GGAS) each bind FAD. Residues 527 to 528 (SR), 533 to 537 (KIYVQ), and Asp-569 each bind NADP(+). Tyr-607 lines the FAD pocket.

The protein belongs to the NADPH-dependent sulphite reductase flavoprotein subunit CysJ family. This sequence in the N-terminal section; belongs to the flavodoxin family. It in the C-terminal section; belongs to the flavoprotein pyridine nucleotide cytochrome reductase family. As to quaternary structure, alpha(8)-beta(8). The alpha component is a flavoprotein, the beta component is a hemoprotein. FAD serves as cofactor. Requires FMN as cofactor.

It catalyses the reaction hydrogen sulfide + 3 NADP(+) + 3 H2O = sulfite + 3 NADPH + 4 H(+). It functions in the pathway sulfur metabolism; hydrogen sulfide biosynthesis; hydrogen sulfide from sulfite (NADPH route): step 1/1. Component of the sulfite reductase complex that catalyzes the 6-electron reduction of sulfite to sulfide. This is one of several activities required for the biosynthesis of L-cysteine from sulfate. The flavoprotein component catalyzes the electron flow from NADPH -&gt; FAD -&gt; FMN to the hemoprotein component. This Shewanella oneidensis (strain ATCC 700550 / JCM 31522 / CIP 106686 / LMG 19005 / NCIMB 14063 / MR-1) protein is Sulfite reductase [NADPH] flavoprotein alpha-component.